A 471-amino-acid polypeptide reads, in one-letter code: RuvB-like protein 2 (471 aa).

75-82 (GPPSTGKT) is an ATP binding site.

It belongs to the RuvB family. In terms of assembly, probably forms a homohexamer. Interacts with RVB1 and may form heterododecamers with RVB1. Component of the SWR1 chromatin remodeling complex composed of at least ACT1, ARP4, RVB1, RVB2, ARP6, YAF9, VPS71, VPS72, SWC3, SWC4, SWC5, SWC7 and SWR1, and perhaps BDF1. Component of the chromatin-remodeling INO80 complex, at least composed of ARP4, ARP5, ARP8, RVB1, RVB2, TAF14, NHP10, IES1, IES3, IES4, IES6, ACT1, IES2, IES5 and INO80. Also belongs to the R2TP complex composed of at least RVB1, RVB2, TAH1 and PIH1. Interacts with SPT15/TBP.

The protein localises to the nucleus. Its subcellular location is the nucleoplasm. It catalyses the reaction ATP + H2O = ADP + phosphate + H(+). Its function is as follows. DNA helicase which participates in several chromatin remodeling complexes, including the SWR1 and the INO80 complexes. The SWR1 complex mediates the ATP-dependent exchange of histone H2A for the H2A variant HZT1 leading to transcriptional regulation of selected genes by chromatin remodeling. The INO80 complex remodels chromatin by shifting nucleosomes. Its ability to induce transcription of some phosphate-responsive genes is modulated by inositol polyphosphates. The INO80 complex is involved in DNA repair by associating to 'Ser-129' phosphorylated H2A histones as a response to DNA damage. During transcription may recruit SPT15/TBP to the TATA-boxes of involved genes. Required for box C/D and box H/ACA snoRNA accumulation and involved in pre-rRNA processing. This chain is RuvB-like protein 2 (RVB2), found in Saccharomyces cerevisiae (strain ATCC 204508 / S288c) (Baker's yeast).